The chain runs to 252 residues: Thiazole synthase (252 aa).

The active-site Schiff-base intermediate with DXP is K91. Residues G152, 179–180 (AG), and 201–202 (NT) each bind 1-deoxy-D-xylulose 5-phosphate.

It belongs to the ThiG family. As to quaternary structure, homotetramer. Forms heterodimers with either ThiH or ThiS.

The protein localises to the cytoplasm. It carries out the reaction [ThiS sulfur-carrier protein]-C-terminal-Gly-aminoethanethioate + 2-iminoacetate + 1-deoxy-D-xylulose 5-phosphate = [ThiS sulfur-carrier protein]-C-terminal Gly-Gly + 2-[(2R,5Z)-2-carboxy-4-methylthiazol-5(2H)-ylidene]ethyl phosphate + 2 H2O + H(+). The protein operates within cofactor biosynthesis; thiamine diphosphate biosynthesis. Functionally, catalyzes the rearrangement of 1-deoxy-D-xylulose 5-phosphate (DXP) to produce the thiazole phosphate moiety of thiamine. Sulfur is provided by the thiocarboxylate moiety of the carrier protein ThiS. In vitro, sulfur can be provided by H(2)S. The sequence is that of Thiazole synthase from Erwinia pyrifoliae (strain DSM 12162 / Ep1/96).